The primary structure comprises 1041 residues: Sarcoplasmic/endoplasmic reticulum calcium ATPase 2 (1041 aa).

Residues Met-1 to Thr-48 are Cytoplasmic-facing. Residues Leu-49–Ala-69 form a helical membrane-spanning segment. Over Cys-70 to Val-89 the chain is Lumenal. A helical membrane pass occupies residues Glu-90–Arg-110. The Cytoplasmic portion of the chain corresponds to Asn-111–Leu-253. The chain crosses the membrane as a helical span at residues Asp-254–Ile-273. Over Ile-274–Tyr-295 the chain is Lumenal. Residues Phe-296–Ala-313 form a helical membrane-spanning segment. Val-304, Ala-305, Ile-307, and Glu-309 together coordinate Ca(2+). The Cytoplasmic portion of the chain corresponds to Val-314 to Met-756. Asp-351 functions as the 4-aspartylphosphate intermediate in the catalytic mechanism. The Mg(2+) site is built by Asp-351 and Thr-353. Residues Thr-353, Glu-442, Arg-489, Lys-514, Arg-559, Thr-624, Gly-625, Asp-626, Arg-677, and Lys-683 each contribute to the ATP site. Mg(2+) is bound at residue Asp-702. An ATP-binding site is contributed by Asn-705. The helical transmembrane segment at Lys-757–Leu-776 threads the bilayer. Residues Asn-767 and Glu-770 each coordinate Ca(2+). The Lumenal portion of the chain corresponds to Thr-777–Leu-786. The chain crosses the membrane as a helical span at residues Ile-787–Gly-807. The segment at Ile-787–Gly-807 is interaction with PLN. Residues Asn-795, Thr-798, and Asp-799 each contribute to the Ca(2+) site. Topologically, residues Phe-808–Leu-827 are cytoplasmic. A helical transmembrane segment spans residues Ile-828–Ala-850. Residues Ala-851–Met-896 lie on the Lumenal side of the membrane. Cysteines 875 and 887 form a disulfide. A helical transmembrane segment spans residues Thr-897 to Ser-916. Glu-907 is a binding site for Ca(2+). Residues Glu-917 to Asn-929 lie on the Cytoplasmic side of the membrane. The helical transmembrane segment at Ile-930–Tyr-948 threads the bilayer. Positions Trp-931–Leu-942 are interaction with PLN. Residues Val-949–Val-963 lie on the Lumenal side of the membrane. A helical membrane pass occupies residues Thr-964 to Lys-984. Topologically, residues Tyr-985–Trp-1041 are cytoplasmic.

Belongs to the cation transport ATPase (P-type) (TC 3.A.3) family. Type IIA subfamily. As to quaternary structure, interacts with sarcolipin (SLN). Interacts with phospholamban (PLN). Interacts with myoregulin (MRLN). Interacts with DWORF. Interacts with TMX2. Mg(2+) serves as cofactor. As to expression, only isoform 2 is detected in heart, while both isoforms are expressed in brain, with isoform 2 being predominant.

The protein resides in the endoplasmic reticulum membrane. It localises to the sarcoplasmic reticulum membrane. It carries out the reaction Ca(2+)(in) + ATP + H2O = Ca(2+)(out) + ADP + phosphate + H(+). Reversibly inhibited by phospholamban (PLN) at low calcium concentrations. Inhibited by sarcolipin (SLN) and myoregulin (MRLN). Enhanced by DWORF; DWORF increases activity by displacing sarcolipin (SLN), phospholamban (PLN) and myoregulin (MRLN). This magnesium-dependent enzyme catalyzes the hydrolysis of ATP coupled with the translocation of calcium from the cytosol to the sarcoplasmic reticulum lumen. Isoform SERCA2A is involved in the regulation of the contraction/relaxation cycle. May act as a regulator of TNFSF11-mediated Ca(2+) signaling during osteoclastogenesis. In Gallus gallus (Chicken), this protein is Sarcoplasmic/endoplasmic reticulum calcium ATPase 2 (ATP2A2).